The chain runs to 129 residues: MIVLDASAAVELMLTTPAGAAVARRLRGETVHAPAHFDVEVIGAIRQAVVRQLISDHEGLVVVVNFLSLPVRRWPLKPFTQRAYQLRSTHTVADGAYVALAEGLGVPLITCDGRLAQSHGHNAEIELVA.

Positions 5 and 94 each coordinate Mg(2+).

Belongs to the PINc/VapC protein family. It depends on Mg(2+) as a cofactor.

Functionally, toxic component of a type II toxin-antitoxin (TA) system. An RNase. The cognate antitoxin is VapB12. This Mycobacterium tuberculosis (strain CDC 1551 / Oshkosh) protein is Ribonuclease VapC12.